A 228-amino-acid polypeptide reads, in one-letter code: 3,4-dihydroxy-2-butanone 4-phosphate synthase (228 aa).

Residues 37–38 (RE), Asp-42, 150–154 (RPGHT), and Glu-174 each bind D-ribulose 5-phosphate. Glu-38 is a binding site for Mg(2+). Residue His-153 coordinates Mg(2+).

The protein belongs to the DHBP synthase family. As to quaternary structure, homodimer. Mg(2+) serves as cofactor. The cofactor is Mn(2+).

It carries out the reaction D-ribulose 5-phosphate = (2S)-2-hydroxy-3-oxobutyl phosphate + formate + H(+). It participates in cofactor biosynthesis; riboflavin biosynthesis; 2-hydroxy-3-oxobutyl phosphate from D-ribulose 5-phosphate: step 1/1. Catalyzes the conversion of D-ribulose 5-phosphate to formate and 3,4-dihydroxy-2-butanone 4-phosphate. In Chloroherpeton thalassium (strain ATCC 35110 / GB-78), this protein is 3,4-dihydroxy-2-butanone 4-phosphate synthase.